A 242-amino-acid polypeptide reads, in one-letter code: Venom nerve growth factor 1 (242 aa).

A signal peptide spans 1-18 (MSMLCYTLIIAFLIGIWA). A propeptide spanning residues 19–125 (APQSEDNVPL…ALNRNIQAKR (107 aa)) is cleaved from the precursor. 3 disulfides stabilise this stretch: C139–C203, C181–C231, and C191–C233.

This sequence belongs to the NGF-beta family. As to quaternary structure, homodimer; non-covalently linked. Expressed by the venom gland.

The protein resides in the secreted. Its function is as follows. Nerve growth factor is important for the development and maintenance of the sympathetic and sensory nervous systems. It stimulates division and differentiation of sympathetic and embryonic sensory neurons as well as basal forebrain cholinergic neurons in the brain. Its relevance in the snake venom is not clear. However, it has been shown to inhibit metalloproteinase-dependent proteolysis of platelet glycoprotein Ib alpha, suggesting a metalloproteinase inhibition to prevent metalloprotease autodigestion and/or protection against prey proteases. Binds a lipid between the two protein chains in the homodimer. The lipid-bound form promotes histamine relase from mouse mast cells, contrary to the lipid-free form. The chain is Venom nerve growth factor 1 from Pseudechis australis (Mulga snake).